The following is a 20-amino-acid chain: Phospholipase A2 homolog P-elapitoxin-Aa1a gamma chain (20 aa).

It belongs to the phospholipase A2 family. Group I subfamily. As to quaternary structure, heterotrimer of alpha, beta and gamma chains, each related to PLA2. In terms of processing, glycosylated. Expressed by the venom gland.

It is found in the secreted. Its function is as follows. Heterotrimer: Snake venom phospholipase A2 (PLA2) that has presynaptic neurotoxicity. Inhibits nerve-evoked twitch contractions but not responses to cholinergic agonists acetylcholine and carbachol and to depolarizing agonist KCl. Causes a fade in tetanic contractions. Displays a triphasic mode of action with depression, enhancement and blockade of neurotransmission. Does not display myotoxic activity such as changes in baseline muscle tension or inhibition of directly stimulated muscle twitches. All subunits are necessary for maximum toxicity. Functionally, monomer: the gamma chain has no significant enzymatic activity and is not toxic by itself. The polypeptide is Phospholipase A2 homolog P-elapitoxin-Aa1a gamma chain (Acanthophis antarcticus (Common death adder)).